The sequence spans 260 residues: Phosphate import ATP-binding protein PstB (260 aa).

The region spanning 14-255 (IETENLNLFY…PKNTKTEEYI (242 aa)) is the ABC transporter domain. Position 46–53 (46–53 (GPSGCGKS)) interacts with ATP.

Belongs to the ABC transporter superfamily. Phosphate importer (TC 3.A.1.7) family. In terms of assembly, the complex is composed of two ATP-binding proteins (PstB), two transmembrane proteins (PstC and PstA) and a solute-binding protein (PstS).

It is found in the cell inner membrane. It carries out the reaction phosphate(out) + ATP + H2O = ADP + 2 phosphate(in) + H(+). Its function is as follows. Part of the ABC transporter complex PstSACB involved in phosphate import. Responsible for energy coupling to the transport system. The sequence is that of Phosphate import ATP-binding protein PstB from Borreliella burgdorferi (strain ATCC 35210 / DSM 4680 / CIP 102532 / B31) (Borrelia burgdorferi).